We begin with the raw amino-acid sequence, 120 residues long: Large ribosomal subunit protein uL18 (120 aa).

The protein belongs to the universal ribosomal protein uL18 family. Part of the 50S ribosomal subunit; part of the 5S rRNA/L5/L18/L25 subcomplex. Contacts the 5S and 23S rRNAs.

This is one of the proteins that bind and probably mediate the attachment of the 5S RNA into the large ribosomal subunit, where it forms part of the central protuberance. This chain is Large ribosomal subunit protein uL18, found in Xanthobacter autotrophicus (strain ATCC BAA-1158 / Py2).